Consider the following 420-residue polypeptide: Serine--tRNA ligase (420 aa).

229-231 contacts L-serine; sequence TAE. Position 260 to 262 (260 to 262) interacts with ATP; that stretch reads RAE. Glu-283 contributes to the L-serine binding site. 347–350 provides a ligand contact to ATP; that stretch reads EISS. Ser-382 provides a ligand contact to L-serine.

This sequence belongs to the class-II aminoacyl-tRNA synthetase family. Type-1 seryl-tRNA synthetase subfamily. In terms of assembly, homodimer. The tRNA molecule binds across the dimer.

Its subcellular location is the cytoplasm. It carries out the reaction tRNA(Ser) + L-serine + ATP = L-seryl-tRNA(Ser) + AMP + diphosphate + H(+). The catalysed reaction is tRNA(Sec) + L-serine + ATP = L-seryl-tRNA(Sec) + AMP + diphosphate + H(+). The protein operates within aminoacyl-tRNA biosynthesis; selenocysteinyl-tRNA(Sec) biosynthesis; L-seryl-tRNA(Sec) from L-serine and tRNA(Sec): step 1/1. In terms of biological role, catalyzes the attachment of serine to tRNA(Ser). Is also able to aminoacylate tRNA(Sec) with serine, to form the misacylated tRNA L-seryl-tRNA(Sec), which will be further converted into selenocysteinyl-tRNA(Sec). This Caldicellulosiruptor saccharolyticus (strain ATCC 43494 / DSM 8903 / Tp8T 6331) protein is Serine--tRNA ligase.